The sequence spans 209 residues: NADH-quinone oxidoreductase subunit C (209 aa).

This sequence belongs to the complex I 30 kDa subunit family. As to quaternary structure, NDH-1 is composed of 14 different subunits. Subunits NuoB, C, D, E, F, and G constitute the peripheral sector of the complex.

It localises to the cell inner membrane. The catalysed reaction is a quinone + NADH + 5 H(+)(in) = a quinol + NAD(+) + 4 H(+)(out). NDH-1 shuttles electrons from NADH, via FMN and iron-sulfur (Fe-S) centers, to quinones in the respiratory chain. The immediate electron acceptor for the enzyme in this species is believed to be ubiquinone. Couples the redox reaction to proton translocation (for every two electrons transferred, four hydrogen ions are translocated across the cytoplasmic membrane), and thus conserves the redox energy in a proton gradient. This chain is NADH-quinone oxidoreductase subunit C, found in Xanthobacter autotrophicus (strain ATCC BAA-1158 / Py2).